A 217-amino-acid polypeptide reads, in one-letter code: Methylthioribulose-1-phosphate dehydratase (217 aa).

Zn(2+)-binding residues include H106 and H108.

The protein belongs to the aldolase class II family. MtnB subfamily. The cofactor is Zn(2+).

The enzyme catalyses 5-(methylsulfanyl)-D-ribulose 1-phosphate = 5-methylsulfanyl-2,3-dioxopentyl phosphate + H2O. It functions in the pathway amino-acid biosynthesis; L-methionine biosynthesis via salvage pathway; L-methionine from S-methyl-5-thio-alpha-D-ribose 1-phosphate: step 2/6. Functionally, catalyzes the dehydration of methylthioribulose-1-phosphate (MTRu-1-P) into 2,3-diketo-5-methylthiopentyl-1-phosphate (DK-MTP-1-P). This is Methylthioribulose-1-phosphate dehydratase from Xanthomonas campestris pv. campestris (strain 8004).